Reading from the N-terminus, the 490-residue chain is AP-5 complex subunit mu-1 (490 aa).

Positions 206 to 476 (KPQVSISITE…LISSDYYIWN (271 aa)) constitute an MHD domain.

The protein belongs to the adaptor complexes medium subunit family. In terms of assembly, probably part of the adaptor protein complex 5 (AP-5) a tetramer composed of AP5B1, AP5M1, AP5S1 and AP5Z1.

It localises to the cytoplasm. The protein resides in the cytosol. Its subcellular location is the late endosome membrane. It is found in the lysosome membrane. In terms of biological role, as part of AP-5, a probable fifth adaptor protein complex it may be involved in endosomal transport. The polypeptide is AP-5 complex subunit mu-1 (AP5M1) (Macaca fascicularis (Crab-eating macaque)).